The chain runs to 382 residues: Cholinephosphotransferase 1 (382 aa).

Topologically, residues 1 to 51 (MPQCECPEPLSAVQLKRLEEHKYSAAGRSLFEPPCQIYWNWLVQQIPTWVA) are cytoplasmic. The chain crosses the membrane as a helical span at residues 52-72 (PNTLTTIGLVINVITTVILVY). N53 is a CDP-choline binding site. Topologically, residues 73–82 (YSPTATEEVP) are lumenal. Residues 83 to 107 (GWAFFLSALGLFIYQSLDAIDGKQA) form a helical membrane-spanning segment. The Mg(2+) site is built by D100 and D103. A CDP-choline-binding site is contributed by R108. Residues 108-114 (RRTNSSS) lie on the Cytoplasmic side of the membrane. Residues 115–139 (ALGELFDHGCDAVSTVFVAVGTCIC) form a helical membrane-spanning segment. D121 contributes to the Mg(2+) binding site. H122 serves as the catalytic Proton acceptor. Residue D125 coordinates Mg(2+). The Lumenal portion of the chain corresponds to 140-149 (CGIGAYPNWM). The chain crosses the membrane as a helical span at residues 150-168 (FFCGFVGMFMFFCAHWQTY). The Cytoplasmic segment spans residues 169 to 179 (VSGTLRFGLVD). The helical transmembrane segment at 180-196 (VTEVQIAIIIMYLLTAF) threads the bilayer. Residues 197–211 (TGVSFWEMRVPVLGV) are Lumenal-facing. The chain crosses the membrane as a helical span at residues 212–237 (NLQTFPILGIIGGFLYSTYNYFFVIM). Residues 238–254 (NGGVGKNGSTVADTSVL) are Cytoplasmic-facing. A helical membrane pass occupies residues 255–270 (TPGLHIGLILTLAFII). The Lumenal segment spans residues 271–282 (FKKSSSHLFEHH). Residues 283 to 305 (PCLYVLTFGMVIAKISNKLVVAH) traverse the membrane as a helical segment. Over 306–318 (MTKSELHLQDTAF) the chain is Cytoplasmic. A helical transmembrane segment spans residues 319 to 328 (IGPGLLFLNQ). At 329–335 (YFNSYID) the chain is on the lumenal side. The chain crosses the membrane as a helical span at residues 336 to 365 (EHIVLWIAMVLSLVDLVRYCTAVCLQIASH). The Cytoplasmic segment spans residues 366–382 (LRIRVFSISPQGHAHKD).

The protein belongs to the CDP-alcohol phosphatidyltransferase class-I family. It depends on Mg(2+) as a cofactor. The cofactor is Mn(2+).

The protein resides in the golgi apparatus membrane. It catalyses the reaction CDP-choline + a 1,2-diacyl-sn-glycerol = a 1,2-diacyl-sn-glycero-3-phosphocholine + CMP + H(+). It carries out the reaction 1-octadecanoyl-2-(5Z,8Z,11Z,14Z-eicosatetraenoyl)-sn-glycerol + CDP-choline = 1-octadecanoyl-2-(5Z,8Z,11Z,14Z-eicosatetraenoyl)-sn-glycero-3-phosphocholine + CMP + H(+). The catalysed reaction is 1-hexadecanoyl-2-(9Z-octadecenoyl)-sn-glycerol + CDP-choline = 1-hexadecanoyl-2-(9Z-octadecenoyl)-sn-glycero-3-phosphocholine + CMP + H(+). The enzyme catalyses 1-hexadecanoyl-2-(4Z,7Z,10Z,13Z,16Z,19Z-docosahexaenoyl)-sn-glycerol + CDP-choline = 1-hexadecanoyl-2-(4Z,7Z,10Z,13Z,16Z,19Z-docosahexaenoyl)-sn-glycero-3-phosphocholine + CMP + H(+). It catalyses the reaction 1,2-dioctanoyl-sn-glycerol + CDP-choline = 1,2-dioctanoyl-sn-glycero-3-phosphocholine + CMP + H(+). It functions in the pathway phospholipid metabolism; phosphatidylcholine biosynthesis; phosphatidylcholine from phosphocholine: step 2/2. Catalyzes the final step of de novo phosphatidylcholine (PC) synthesis, i.e. the transfer of choline phosphate from CDP-choline to the free hydroxyl of a diacylglycerol (DAG), producing a PC. It thereby plays a central role in the formation and maintenance of vesicular membranes. The protein is Cholinephosphotransferase 1 (chpt1) of Danio rerio (Zebrafish).